The following is a 190-amino-acid chain: Protein shisa-like-2A (190 aa).

The next 2 helical transmembrane spans lie at 48-68 (SFFP…LIGL) and 70-90 (VAAV…YLFI).

Belongs to the shisa family.

It localises to the membrane. This chain is Protein shisa-like-2A, found in Homo sapiens (Human).